The following is a 407-amino-acid chain: 1-deoxy-D-xylulose 5-phosphate reductoisomerase (407 aa).

6 residues coordinate NADPH: T25, G26, S27, I28, N53, and N136. Position 137 (K137) interacts with 1-deoxy-D-xylulose 5-phosphate. E138 contacts NADPH. Residue D162 participates in Mn(2+) binding. The 1-deoxy-D-xylulose 5-phosphate site is built by S163, E164, S188, and H211. E164 contributes to the Mn(2+) binding site. G217 provides a ligand contact to NADPH. 1-deoxy-D-xylulose 5-phosphate contacts are provided by S224, N229, K230, and E233. Residue E233 participates in Mn(2+) binding.

It belongs to the DXR family. Requires Mg(2+) as cofactor. It depends on Mn(2+) as a cofactor.

The catalysed reaction is 2-C-methyl-D-erythritol 4-phosphate + NADP(+) = 1-deoxy-D-xylulose 5-phosphate + NADPH + H(+). It participates in isoprenoid biosynthesis; isopentenyl diphosphate biosynthesis via DXP pathway; isopentenyl diphosphate from 1-deoxy-D-xylulose 5-phosphate: step 1/6. Its function is as follows. Catalyzes the NADPH-dependent rearrangement and reduction of 1-deoxy-D-xylulose-5-phosphate (DXP) to 2-C-methyl-D-erythritol 4-phosphate (MEP). In Rhodopseudomonas palustris (strain TIE-1), this protein is 1-deoxy-D-xylulose 5-phosphate reductoisomerase.